Consider the following 379-residue polypeptide: 1-deoxy-D-xylulose 5-phosphate reductoisomerase (379 aa).

Residues Thr10, Gly11, Ser12, Ile13, Arg38, Asn39, and Asn121 each contribute to the NADPH site. Lys122 lines the 1-deoxy-D-xylulose 5-phosphate pocket. NADPH is bound at residue Glu123. Mn(2+) is bound at residue Asp147. 1-deoxy-D-xylulose 5-phosphate is bound by residues Ser148, Glu149, Ser173, and His196. Residue Glu149 coordinates Mn(2+). Residue Gly202 coordinates NADPH. 1-deoxy-D-xylulose 5-phosphate contacts are provided by Ser209, Asn214, Lys215, and Glu218. A Mn(2+)-binding site is contributed by Glu218.

It belongs to the DXR family. The cofactor is Mg(2+). Requires Mn(2+) as cofactor.

The catalysed reaction is 2-C-methyl-D-erythritol 4-phosphate + NADP(+) = 1-deoxy-D-xylulose 5-phosphate + NADPH + H(+). It functions in the pathway isoprenoid biosynthesis; isopentenyl diphosphate biosynthesis via DXP pathway; isopentenyl diphosphate from 1-deoxy-D-xylulose 5-phosphate: step 1/6. Functionally, catalyzes the NADPH-dependent rearrangement and reduction of 1-deoxy-D-xylulose-5-phosphate (DXP) to 2-C-methyl-D-erythritol 4-phosphate (MEP). The protein is 1-deoxy-D-xylulose 5-phosphate reductoisomerase of Chlamydia trachomatis serovar A (strain ATCC VR-571B / DSM 19440 / HAR-13).